Consider the following 529-residue polypeptide: Bifunctional purine biosynthesis protein PurH (529 aa).

Residues 2 to 149 (TDLVPLRRAL…KNHSFVTVLT (148 aa)) enclose the MGS-like domain.

This sequence belongs to the PurH family.

The catalysed reaction is (6R)-10-formyltetrahydrofolate + 5-amino-1-(5-phospho-beta-D-ribosyl)imidazole-4-carboxamide = 5-formamido-1-(5-phospho-D-ribosyl)imidazole-4-carboxamide + (6S)-5,6,7,8-tetrahydrofolate. The enzyme catalyses IMP + H2O = 5-formamido-1-(5-phospho-D-ribosyl)imidazole-4-carboxamide. The protein operates within purine metabolism; IMP biosynthesis via de novo pathway; 5-formamido-1-(5-phospho-D-ribosyl)imidazole-4-carboxamide from 5-amino-1-(5-phospho-D-ribosyl)imidazole-4-carboxamide (10-formyl THF route): step 1/1. It participates in purine metabolism; IMP biosynthesis via de novo pathway; IMP from 5-formamido-1-(5-phospho-D-ribosyl)imidazole-4-carboxamide: step 1/1. This Dinoroseobacter shibae (strain DSM 16493 / NCIMB 14021 / DFL 12) protein is Bifunctional purine biosynthesis protein PurH.